Reading from the N-terminus, the 838-residue chain is MSSAVLVTLLPDPSSSFREDAPRPPVPGEEGETPPCQPSVGKVQSTKPMPVSSNARRNEDGLGEPEGRASPDSPLTRWTKSLHSLLGDQDGAYLFRTFLEREKCVDTLDFWFACNGFRQMNLKDTKTLRVAKAIYKRYIENNSVVSKQLKPATKTYIRDGIKKQQIGSVMFDQAQTEIQAVMEENAYQVFLTSDIYLEYVRSGGENTAYMSNGGLGSLKVLCGYLPTLNEEEEWTCADLKCKLSPTVVGLSSKTLRATASVRSTETAENGFRSFKRSEPVNPYHVGSGYVFAPATSANDSELSSDALTDDSMSMTDSSVDGIPPYRMGSKKQLQREMHRSVKANGQVSLPHFPRTHRLPKEMTPVEPAAFAAELISRLEKLKLELESRHSLEERLQQIREDEEKEGSEQALSSRDGAPVQHPLALLPSGSYEEDPQTILDDHLSRVLKTPGCQSPGVGRYSPRSRSPDHHHHHHQQCHALLPTGGKLPPEAACPLLGGKSFLTKQTTKHVHHHYIHHHAVPKTKEEIEAEATQRVRCLCPGGTDYYCYSKCKSHSKPPEPLPGEQFCGSRGGTLPKRNTKGTEPGLALPAREGGMSSAAGAPQLPGEEGDRSQDVWQWMLESERQSKSKPHSTQSIRKSYPLESARAPPGERVSRHHLLGASGHPRSAARAHPFTQDPAMPPLTPPNTLAQLEEACRRLAEVSKPQKQRCCVASQQRDRNHPATGQAGPTSFSNPSLASEDHKEPKRLASVHALQASELIVTYFFCGEEIPYRRMLKAQSLTLGHFKEQLSKKGNYRYYFKKASDEFACGAVFEEIWDDETVLPMYEGRILGKVERID.

Residues 1 to 75 (MSSAVLVTLL…EGRASPDSPL (75 aa)) are disordered. The Tankyrase-binding motif motif lies at 21 to 30 (APRPPVPGEE). Positions 42–55 (KVQSTKPMPVSSNA) are enriched in polar residues. Residues 56–69 (RRNEDGLGEPEGRA) are compositionally biased toward basic and acidic residues. Positions 81–200 (SLHSLLGDQD…LTSDIYLEYV (120 aa)) constitute an RGS domain. Disordered regions lie at residues 300-333 (SELS…KKQL), 398-435 (IRED…EEDP), 450-483 (PGCQ…LLPT), 568-682 (GSRG…AMPP), and 712-744 (VASQ…DHKE). The span at 303–318 (SSDALTDDSMSMTDSS) shows a compositional bias: low complexity. The interval 327-413 (MGSKKQLQRE…KEGSEQALSS (87 aa)) is interaction with GSK3B. Positions 413–476 (SRDGAPVQHP…PDHHHHHHQQ (64 aa)) are interaction with beta-catenin. A compositionally biased stretch (polar residues) spans 727-737 (AGPTSFSNPSL). The DIX domain occupies 756–838 (ASELIVTYFF…RILGKVERID (83 aa)).

As to quaternary structure, interacts with SMAD7 and RNF111. Interacts with ANKRD6. Interacts with glycogen synthase kinase-3 beta (GSK3B) and beta-catenin. The interaction between axin and beta-catenin occurs via the armadillo repeats contained in beta-catenin. Interacts with SIAH1. Interacts with SIAH2. ADP-ribosylated by tankyrase TNKS and TNKS2. Poly-ADP-ribosylated protein is recognized by RNF146, followed by ubiquitination and subsequent activation of the Wnt signaling pathway. Post-translationally, ubiquitinated by RNF146 when poly-ADP-ribosylated, leading to its degradation and subsequent activation of the Wnt signaling pathway. Deubiquitinated by USP34, deubiquitinated downstream of beta-catenin stabilization step: deubiquitination is important Wnt signaling to positively regulate beta-catenin (CTNBB1)-mediated transcription. In terms of processing, probably phosphorylated by GSK3B and dephosphorylated by PP2A. In terms of tissue distribution, expressed in lung and thymus.

It localises to the cytoplasm. Functionally, inhibitor of the Wnt signaling pathway. Down-regulates beta-catenin. Probably facilitate the phosphorylation of beta-catenin and APC by GSK3B. This is Axin-2 (Axin2) from Rattus norvegicus (Rat).